A 257-amino-acid polypeptide reads, in one-letter code: Acetylglutamate kinase (257 aa).

Residues 43–44, R65, and N157 contribute to the substrate site; that span reads GG. Residues 180 to 185 and 208 to 210 contribute to the ATP site; these read DVSGIL and IIT.

It belongs to the acetylglutamate kinase family. ArgB subfamily. Homodimer.

Its subcellular location is the cytoplasm. It carries out the reaction N-acetyl-L-glutamate + ATP = N-acetyl-L-glutamyl 5-phosphate + ADP. Its pathway is amino-acid biosynthesis; L-arginine biosynthesis; N(2)-acetyl-L-ornithine from L-glutamate: step 2/4. Catalyzes the ATP-dependent phosphorylation of N-acetyl-L-glutamate. The chain is Acetylglutamate kinase from Pectobacterium atrosepticum (strain SCRI 1043 / ATCC BAA-672) (Erwinia carotovora subsp. atroseptica).